A 171-amino-acid polypeptide reads, in one-letter code: tRNA-specific adenosine deaminase (171 aa).

The 128-residue stretch at 6 to 133 folds into the CMP/dCMP-type deaminase domain; the sequence is EEQTYFMQEA…ERLNHRVQVE (128 aa). His57 lines the Zn(2+) pocket. The Proton donor role is filled by Glu59. Zn(2+)-binding residues include Cys87 and Cys90.

Belongs to the cytidine and deoxycytidylate deaminase family. Homodimer. The cofactor is Zn(2+).

The enzyme catalyses adenosine(34) in tRNA + H2O + H(+) = inosine(34) in tRNA + NH4(+). Functionally, catalyzes the deamination of adenosine to inosine at the wobble position 34 of tRNA(Arg2). This is tRNA-specific adenosine deaminase from Streptococcus pyogenes serotype M1.